The following is a 310-amino-acid chain: 4-hydroxyproline epimerase (310 aa).

C88 acts as the Proton acceptor in catalysis. Substrate-binding positions include 89–90 (GH), H208, and D232. Catalysis depends on C236, which acts as the Proton donor. 237-238 (GT) provides a ligand contact to substrate.

This sequence belongs to the proline racemase family. Homodimer.

It catalyses the reaction trans-4-hydroxy-L-proline = cis-4-hydroxy-D-proline. Its activity is regulated as follows. Inhibited by iodoacetate, iodoacetamide and by high amounts (10 mM) of pyrrole-2-carboxylic acid (PYC). Not inhibited by PYC at 1 mM. Allows intracellular utilization of 4-hydroxyproline, one of the major constituents of host collagen, by converting 4-hydroxy-L-proline to 4-hydroxy-D-proline, which can be further metabolized by intracellular 4-hydroxy-D-proline oxidases. This Burkholderia pseudomallei (strain K96243) protein is 4-hydroxyproline epimerase.